Consider the following 1106-residue polypeptide: Carbamoyl phosphate synthase large chain (1106 aa).

A carboxyphosphate synthetic domain region spans residues 1–402 (MPKREDLKSV…ALQKALRSLE (402 aa)). The ATP site is built by Arg129, Arg169, Gly175, Gly176, Glu208, Ile210, Glu215, Gly241, Val242, His243, Gln285, and Glu299. The ATP-grasp 1 domain occupies 133–328 (KGVVERCGAE…IAKIATKLSL (196 aa)). Mg(2+) contacts are provided by Gln285, Glu299, and Asn301. The Mn(2+) site is built by Gln285, Glu299, and Asn301. The segment at 403 to 546 (QKGSQLDFGS…YHYSSYDQED (144 aa)) is oligomerization domain. The segment at 547-956 (EIALHEKPSV…AFAKSQAAAN (410 aa)) is carbamoyl phosphate synthetic domain. In terms of domain architecture, ATP-grasp 2 spans 677–868 (ARVLDIAGLI…LAKAAALIGT (192 aa)). ATP-binding residues include Arg713, Arg752, Leu754, Glu759, Gly784, Ile785, His786, Ser787, Gln827, and Glu839. Residues Gln827, Glu839, and Asn841 each coordinate Mg(2+). Gln827, Glu839, and Asn841 together coordinate Mn(2+). An MGS-like domain is found at 957-1106 (NALPTEGKVF…EALLEAAANV (150 aa)). The segment at 957–1106 (NALPTEGKVF…EALLEAAANV (150 aa)) is allosteric domain.

This sequence belongs to the CarB family. As to quaternary structure, composed of two chains; the small (or glutamine) chain promotes the hydrolysis of glutamine to ammonia, which is used by the large (or ammonia) chain to synthesize carbamoyl phosphate. Tetramer of heterodimers (alpha,beta)4. It depends on Mg(2+) as a cofactor. The cofactor is Mn(2+).

It catalyses the reaction hydrogencarbonate + L-glutamine + 2 ATP + H2O = carbamoyl phosphate + L-glutamate + 2 ADP + phosphate + 2 H(+). It carries out the reaction hydrogencarbonate + NH4(+) + 2 ATP = carbamoyl phosphate + 2 ADP + phosphate + 2 H(+). The protein operates within amino-acid biosynthesis; L-arginine biosynthesis; carbamoyl phosphate from bicarbonate: step 1/1. It functions in the pathway pyrimidine metabolism; UMP biosynthesis via de novo pathway; (S)-dihydroorotate from bicarbonate: step 1/3. Functionally, large subunit of the glutamine-dependent carbamoyl phosphate synthetase (CPSase). CPSase catalyzes the formation of carbamoyl phosphate from the ammonia moiety of glutamine, carbonate, and phosphate donated by ATP, constituting the first step of 2 biosynthetic pathways, one leading to arginine and/or urea and the other to pyrimidine nucleotides. The large subunit (synthetase) binds the substrates ammonia (free or transferred from glutamine from the small subunit), hydrogencarbonate and ATP and carries out an ATP-coupled ligase reaction, activating hydrogencarbonate by forming carboxy phosphate which reacts with ammonia to form carbamoyl phosphate. The protein is Carbamoyl phosphate synthase large chain of Renibacterium salmoninarum (strain ATCC 33209 / DSM 20767 / JCM 11484 / NBRC 15589 / NCIMB 2235).